A 207-amino-acid polypeptide reads, in one-letter code: Large ribosomal subunit protein uL4 (207 aa).

The segment at 47 to 78 (GTASSKTRAEVRGGGKKPWRQKGTGRARVGSS) is disordered. Residues 60–71 (GGKKPWRQKGTG) show a composition bias toward basic residues.

This sequence belongs to the universal ribosomal protein uL4 family. As to quaternary structure, part of the 50S ribosomal subunit.

One of the primary rRNA binding proteins, this protein initially binds near the 5'-end of the 23S rRNA. It is important during the early stages of 50S assembly. It makes multiple contacts with different domains of the 23S rRNA in the assembled 50S subunit and ribosome. In terms of biological role, forms part of the polypeptide exit tunnel. This chain is Large ribosomal subunit protein uL4, found in Syntrophomonas wolfei subsp. wolfei (strain DSM 2245B / Goettingen).